The primary structure comprises 305 residues: Acyl transferase (305 aa).

Active-site charge relay system residues include Ser116, Asp213, and His243.

This sequence belongs to the LuxD family.

Its pathway is lipid metabolism; fatty acid reduction for biolumincescence. Its function is as follows. Acyl transferase is part of the fatty acid reductase system required for aldehyde biosynthesis; it produces fatty acids for the luminescent reaction. This chain is Acyl transferase, found in Photobacterium leiognathi.